Reading from the N-terminus, the 540-residue chain is Extracellular matrix protein 1 (540 aa).

The N-terminal stretch at 1–19 (MGTTARAALVLTYLAVASA) is a signal peptide. Disordered stretches follow at residues 41–85 (VGYA…EATP) and 120–175 (LQHP…PSPD). Polar residues-rich tracts occupy residues 71–85 (GQSQ…EATP) and 146–156 (NAAQHCQQDRS). 2 repeat units span residues 150–279 (HCQQ…QPHY) and 283–405 (ACPS…YPNY). Residues 150 to 405 (HCQQDRSQGG…FARRAPYPNY (256 aa)) form a 2 X approximate repeats region. A glycan (N-linked (GlcNAc...) asparagine) is linked at Asn354. Asn444 is a glycosylation site (N-linked (GlcNAc...) (complex) asparagine). A disordered region spans residues 515-540 (ENAKGQGEQGSTGGTNISSTSEPKEE). The segment covering 528–540 (GTNISSTSEPKEE) has biased composition (low complexity). Asn530 carries an N-linked (GlcNAc...) asparagine glycan.

As to quaternary structure, interacts (via C-terminus) with HSPG2 (via C-terminus). Interacts with EFEMP1/FBLN3 and LAMB3. Interacts with MMP9. Expressed in breast cancer tissues. Little or no expression observed in normal breast tissues. Expressed in skin; wide expression is observed throughout the dermis with minimal expression in the epidermis.

It is found in the secreted. It localises to the extracellular space. Its subcellular location is the extracellular matrix. Involved in endochondral bone formation as negative regulator of bone mineralization. Stimulates the proliferation of endothelial cells and promotes angiogenesis. Inhibits MMP9 proteolytic activity. This is Extracellular matrix protein 1 (ECM1) from Homo sapiens (Human).